A 101-amino-acid chain; its full sequence is NADH-quinone oxidoreductase subunit K (101 aa).

3 helical membrane-spanning segments follow: residues 4–24 (LSHY…GIFL), 30–50 (IVLL…FIAF), and 61–81 (VFVF…LAIL).

The protein belongs to the complex I subunit 4L family. In terms of assembly, NDH-1 is composed of 14 different subunits. Subunits NuoA, H, J, K, L, M, N constitute the membrane sector of the complex.

It localises to the cell inner membrane. It carries out the reaction a quinone + NADH + 5 H(+)(in) = a quinol + NAD(+) + 4 H(+)(out). In terms of biological role, NDH-1 shuttles electrons from NADH, via FMN and iron-sulfur (Fe-S) centers, to quinones in the respiratory chain. The immediate electron acceptor for the enzyme in this species is believed to be ubiquinone. Couples the redox reaction to proton translocation (for every two electrons transferred, four hydrogen ions are translocated across the cytoplasmic membrane), and thus conserves the redox energy in a proton gradient. This is NADH-quinone oxidoreductase subunit K from Azoarcus sp. (strain BH72).